The chain runs to 258 residues: MGACCSSRRNRSPSLAALAEETEVVLRCLAGRVVDLPGGDEVRIAPDVGRPGQNFGYFKFPGPSRFAYVKFIGRAYALGSGRKFLLYLSRNFQVFGYEDGTGLHMLAKSLHDFLKFKGLSDRDLVVVDSVALTSQLRPLTLPIRSTSDVETLVAEEATTNYTSTENLLGQTQSSTHRPLGVPLSNVKTMGVPPTKPSSQRPRGKGGRPPARLKSIREETVSGMARAREECNSPSEHDRLTSEMTDCDTTRRYPPSFFK.

Residues 163-176 (STENLLGQTQSSTH) are compositionally biased toward polar residues. Residues 163 to 258 (STENLLGQTQ…TRRYPPSFFK (96 aa)) form a disordered region. A compositionally biased stretch (basic and acidic residues) spans 214–240 (SIREETVSGMARAREECNSPSEHDRLT).

This chain is Gene 3 protein, found in Equine herpesvirus 1 (strain Kentucky A) (EHV-1).